Consider the following 450-residue polypeptide: Glucose-6-phosphate isomerase (450 aa).

At Thr39 the chain carries Phosphothreonine. Residue Glu291 is the Proton donor of the active site. Catalysis depends on residues His312 and Lys426.

It belongs to the GPI family.

It is found in the cytoplasm. It catalyses the reaction alpha-D-glucose 6-phosphate = beta-D-fructose 6-phosphate. It participates in carbohydrate biosynthesis; gluconeogenesis. Its pathway is carbohydrate degradation; glycolysis; D-glyceraldehyde 3-phosphate and glycerone phosphate from D-glucose: step 2/4. Functionally, catalyzes the reversible isomerization of glucose-6-phosphate to fructose-6-phosphate. The protein is Glucose-6-phosphate isomerase of Bacillus cytotoxicus (strain DSM 22905 / CIP 110041 / 391-98 / NVH 391-98).